An 877-amino-acid polypeptide reads, in one-letter code: SRP-independent targeting protein 1 (877 aa).

A phosphoserine mark is found at S309, S310, S311, S332, and S334. 3 disordered regions span residues 369–414, 446–521, and 550–579; these read LRKQ…PSND, DDYT…DVLS, and KPFNQKFPNSQQPDSAGASSPKRSTSSNHF. Positions 389 to 402 are enriched in low complexity; sequence RSQSYSSSNMSRSP. Positions 412 to 441 form a coiled coil; the sequence is SNDELVYDELNNQINEVQDRAKNEEIVLYN. Residues 447–462 show a composition bias toward basic and acidic residues; the sequence is DYTKERGEQEQDRTSY. Over residues 470–501 the composition is skewed to acidic residues; sequence YDDEEGGNEDNYDDDEDDDDDDDDDDESDDEG. Composition is skewed to polar residues over residues 510-521 and 551-579; these read LSRSGSSTDVLS and PFNQKFPNSQQPDSAGASSPKRSTSSNHF. Glycyl lysine isopeptide (Lys-Gly) (interchain with G-Cter in ubiquitin) cross-links involve residues K668 and K670. 3 positions are modified to phosphoserine: S692, S694, and S706. A disordered region spans residues 773-815; that stretch reads SLPKEREDDNDSTNSTIVPNHPDNDNYNDNDNDNNTGINSNNF. A compositionally biased stretch (low complexity) spans 805–815; it reads DNNTGINSNNF. Position 841 is a phosphoserine (S841).

In terms of assembly, interacts with ENV10/SND2.

It localises to the cytoplasm. Its function is as follows. Functions in the SND pathway, a SRP (signal recognition particle) and GET (guided entry of tail-anchored proteins) independent pathway for targeting a broad range of substrate proteins to the endoplasmic reticulum. SND functions in parallel to GET in targeting proteins with downstream hydrophobic motifs. The protein is SRP-independent targeting protein 1 of Saccharomyces cerevisiae (strain ATCC 204508 / S288c) (Baker's yeast).